The primary structure comprises 781 residues: Cytosolic phospholipase A2 beta (781 aa).

A C2 domain is found at 1–112 (MAVAEVSRTC…RAGEFRRESF (112 aa)). 5 residues coordinate Ca(2+): Asp-26, Asp-32, Asp-82, Asp-84, and Asp-90. A PLA2c domain is found at 246-781 (EAGLRELAVR…VQRRRQRRPH (536 aa)). Residue Ser-335 is the Nucleophile of the active site. The Proton acceptor role is filled by Asp-615.

Ca(2+) serves as cofactor. Widely expressed. Expressed at higher level in brain, heart, liver, cerebellum and pancreas.

The protein resides in the cytoplasm. The protein localises to the cytosol. It localises to the mitochondrion membrane. Its subcellular location is the early endosome membrane. The enzyme catalyses a 1,2-diacyl-sn-glycero-3-phosphocholine + H2O = a 1-acyl-sn-glycero-3-phosphocholine + a fatty acid + H(+). The catalysed reaction is a 1-acyl-sn-glycero-3-phosphocholine + H2O = sn-glycerol 3-phosphocholine + a fatty acid + H(+). It carries out the reaction 1-hexadecanoyl-2-(9Z,12Z-octadecadienoyl)-sn-glycero-3-phosphoethanolamine + H2O = 1-hexadecanoyl-sn-glycero-3-phosphoethanolamine + (9Z,12Z)-octadecadienoate + H(+). It catalyses the reaction 1-hexadecanoyl-2-(5Z,8Z,11Z,14Z-eicosatetraenoyl)-sn-glycero-3-phosphoethanolamine + H2O = 1-hexadecanoyl-sn-glycero-3-phosphoethanolamine + (5Z,8Z,11Z,14Z)-eicosatetraenoate + H(+). The enzyme catalyses 1-hexadecanoyl-sn-glycero-3-phosphocholine + H2O = sn-glycerol 3-phosphocholine + hexadecanoate + H(+). The catalysed reaction is 1-hexadecanoyl-2-(5Z,8Z,11Z,14Z-eicosatetraenoyl)-sn-glycero-3-phosphocholine + H2O = 1-hexadecanoyl-sn-glycero-3-phosphocholine + (5Z,8Z,11Z,14Z)-eicosatetraenoate + H(+). It carries out the reaction 1-hexadecanoyl-2-(5Z,8Z,11Z,14Z-eicosatetraenoyl)-sn-glycero-3-phosphocholine + H2O = 2-(5Z,8Z,11Z,14Z)-eicosatetraenoyl-sn-glycero-3-phosphocholine + hexadecanoate + H(+). Its activity is regulated as follows. Stimulated by cytosolic Ca(2+). Functionally, calcium-dependent phospholipase A1 and A2 and lysophospholipase that may play a role in membrane phospholipid remodeling. In terms of biological role, calcium-dependent phospholipase A2 and lysophospholipase. Cleaves the ester bond of the fatty acyl group attached to the sn-2 position of phosphatidylethanolamines, producing lysophospholipids that may be used in deacylation-reacylation cycles. Hydrolyzes lysophosphatidylcholines with low efficiency but is inefficient toward phosphatidylcholines. Calcium-dependent phospholipase A1 and A2 and lysophospholipase. Cleaves the ester bond of the fatty acyl group attached to the sn-1 or sn-2 position of diacyl phospholipids (phospholipase A1 and A2 activity, respectively), producing lysophospholipids that may be used in deacylation-reacylation cycles. Can further hydrolyze lysophospholipids enabling complete deacylation. Has no activity toward alkylacyl phospholipids. The chain is Cytosolic phospholipase A2 beta (PLA2G4B) from Homo sapiens (Human).